Here is a 313-residue protein sequence, read N- to C-terminus: tRNA dimethylallyltransferase (313 aa).

11–18 contacts ATP; sequence GPTAGGKT. Position 13-18 (13-18) interacts with substrate; sequence TAGGKT. 3 interaction with substrate tRNA regions span residues 36–39, 160–164, and 243–248; these read DSAL, QRIGR, and RCVGYR.

This sequence belongs to the IPP transferase family. Monomer. Mg(2+) serves as cofactor.

The catalysed reaction is adenosine(37) in tRNA + dimethylallyl diphosphate = N(6)-dimethylallyladenosine(37) in tRNA + diphosphate. Catalyzes the transfer of a dimethylallyl group onto the adenine at position 37 in tRNAs that read codons beginning with uridine, leading to the formation of N6-(dimethylallyl)adenosine (i(6)A). This Neisseria meningitidis serogroup A / serotype 4A (strain DSM 15465 / Z2491) protein is tRNA dimethylallyltransferase.